Reading from the N-terminus, the 486-residue chain is F-box protein At1g80960 (486 aa).

One can recognise an F-box domain in the interval 49-97; the sequence is VDWISKLPDDVLLIILSRLSTEEAIRTSVVSKRWEHVWNQMSHLVFDMR.

The polypeptide is F-box protein At1g80960 (Arabidopsis thaliana (Mouse-ear cress)).